The following is a 1332-amino-acid chain: Delta-poly-L-ornithine synthetase (1332 aa).

D217, E221, and T304 together coordinate L-ornithine. Residues E221, T304, G306, and T308 each coordinate D-ornithine. L-ornithine contacts are provided by V312 and S313. Residue S313 participates in D-ornithine binding. The region spanning 524–601 (QPQNPAEEIL…AIAALMLEQP (78 aa)) is the Carrier domain. Position 560 is an O-(pantetheine 4'-phosphoryl)serine (S560). The next 6 helical transmembrane spans lie at 629–649 (LVTI…PFFT), 664–684 (AIAL…VLSI), 868–888 (VSAL…FLLV), 908–928 (LYYF…TAVI), 1120–1140 (IVLP…DVID), and 1151–1171 (LVAL…IVAL).

It belongs to the ATP-dependent AMP-binding enzyme family. The cofactor is pantetheine 4'-phosphate.

Its subcellular location is the cell membrane. The catalysed reaction is n L-ornithine + n ATP + H2O = N(5)-(L-ornithyl)-[N(5)-(L-ornithyl)]n-1 + n AMP + n diphosphate + n H(+). The enzyme catalyses n D-ornithine + n ATP + H2O = N(5)-(D-ornithyl)-[N(5)-(D-ornithyl)]n-1 + n AMP + n diphosphate + n H(+). Catalyzes the polymerization of L-ornithine, generating poly-L-ornithine composed of 7-12 amino acid units joined via isopeptide bonds between the carboxylate and the side chain amine. This polymer exhibits potent antifungal activity and thus may have a potential role in survival benefit for A.baumannii. The reaction occurs via ATP-dependent adenylation of the substrate. Can also adenylate D-ornithine with similar efficiency and thus may produce D-ornithine polymers. In Acinetobacter baumannii (strain AB307-0294), this protein is Delta-poly-L-ornithine synthetase.